The primary structure comprises 417 residues: Phosphoglycerate kinase (417 aa).

Residues Val-23, Asp-24, Phe-25, Asn-26, Gln-39, Arg-40, Ser-63, His-64, Gly-66, Arg-67, Leu-122, Arg-123, His-170, and Arg-171 each contribute to the (2R)-3-phosphoglycerate site. Gly-214 contributes to the ADP binding site. Gly-214 serves as a coordination point for CDP. Ala-215 and Lys-216 together coordinate AMP. Residue Ala-215 participates in ATP binding. Ala-215 provides a ligand contact to Mg(2+). Asp-219 serves as a coordination point for CDP. Asp-219 is a binding site for Mg(2+). Lys-220 contacts AMP. ATP is bound at residue Lys-220. An ADP-binding site is contributed by Gly-238. Residue Gly-238 coordinates CDP. 2 residues coordinate AMP: Ala-239 and Gly-313. 2 residues coordinate ATP: Ala-239 and Gly-313. Residues Gly-338 and Phe-343 each coordinate CDP. Position 343 (Phe-343) interacts with ADP. Glu-344 contacts AMP. ATP-binding residues include Glu-344, Asp-375, and Thr-376. Asp-375 lines the Mg(2+) pocket.

Belongs to the phosphoglycerate kinase family. As to quaternary structure, monomer. Mg(2+) is required as a cofactor.

The protein resides in the cytoplasm. The protein localises to the mitochondrion. It catalyses the reaction (2R)-3-phosphoglycerate + ATP = (2R)-3-phospho-glyceroyl phosphate + ADP. It participates in carbohydrate degradation; glycolysis; pyruvate from D-glyceraldehyde 3-phosphate: step 2/5. Catalyzes one of the two ATP producing reactions in the glycolytic pathway via the reversible conversion of 1,3-diphosphoglycerate to 3-phosphoglycerate. Both L- and D- forms of purine and pyrimidine nucleotides can be used as substrates, but the activity is much lower on pyrimidines. Negatively regulates the biosynthesis of acetyl-CoA from pyruvate in the mitochondrion. The chain is Phosphoglycerate kinase (pgkA) from Aspergillus oryzae (strain ATCC 42149 / RIB 40) (Yellow koji mold).